A 647-amino-acid polypeptide reads, in one-letter code: Nucleoside triphosphatase I (647 aa).

In terms of domain architecture, Helicase ATP-binding spans 48–213 (FIGLSELNSL…KYLINLLRPK (166 aa)). 61–68 (WDTGYGKT) is an ATP binding site. Positions 150-153 (DEVH) match the DEXH box motif. The 164-residue stretch at 377–540 (YIEACKIILN…KINVLNSFMK (164 aa)) folds into the Helicase C-terminal domain. The interval 466–532 (DIIILDLPWK…DLIKSKQDKI (67 aa)) is binding to the cap-specific mRNA (nucleoside-2'-O-)-methyltransferase.

This sequence belongs to the helicase family. NPH I subfamily. As to quaternary structure, monomer. Interacts (via C-terminus) with RAP94 (via N-terminus). Interacts with the cap-specific mRNA (nucleoside-2'-O-)-methyltransferase.

It is found in the virion. The enzyme catalyses a ribonucleoside 5'-triphosphate + H2O = a ribonucleoside 5'-diphosphate + phosphate + H(+). DNA-dependent ATPase required for providing the needed energy to achieve the termination of early transcripts. Acts in concert with the RAP94 subunit of the virion RNA polymerase and the capping enzyme/VTF to catalyze release of UUUUUNU-containing nascent RNA from the elongation complex. NPH-I must bind ssDNA in order to exhibit ATPase activity. The polypeptide is Nucleoside triphosphatase I (NPH1) (Melanoplus sanguinipes entomopoxvirus (MsEPV)).